The chain runs to 53 residues: Natriuretic peptide DNP-2 (53 aa).

C7 and C23 form a disulfide bridge. The propeptide occupies 39–53 (IIRDLHPDSKQSQAA).

It belongs to the natriuretic peptide family. As to expression, expressed by the venom gland.

It localises to the secreted. Exhibits vasodilator, natriuretic and diuretic properties in animal models and human tissues. Acts by stimulating cGMP via the natriuretic peptide receptor 1 (NPR1). Is a poor agonist of the atrial natriuretic peptide receptor 2 (NPR2). Is not degraded by neutral endopeptidase (NEP/MME). Binds to atrial natriuretic peptide clearance receptor (NPR-C/NPR3), which may be responsible of the removal of DNP from the circulation. Increases calcium uptake and induces histamine release from rat peritoneal mast cells. Increases calcium-activated potassium (KCa) current in gastric antral circular smooth muscle cells by increasing cGMP production and activating inositol trisphosphate receptors (IP3Rs). In vivo, reduces both systolic and diastolic blood pressure with no effect on heart rate, when intravenously injected in conscious rabbits. This chain is Natriuretic peptide DNP-2, found in Dendroaspis angusticeps (Eastern green mamba).